Reading from the N-terminus, the 506-residue chain is Ecdysteroid UDP-glucosyltransferase (506 aa).

Positions 1–18 are cleaved as a signal peptide; the sequence is MTILCWLALLSTLTAVNA.

The protein belongs to the UDP-glycosyltransferase family. Glycosylated.

In terms of biological role, catalyzes the transfer of glucose from UDP-glucose to ecdysteroids which are insect molting hormones. Acts on the host at the organismal level to block its development, thereby increasing the yield of progeny virus. This chain is Ecdysteroid UDP-glucosyltransferase (EGT), found in Lepidoptera (butterflies and moths).